A 267-amino-acid polypeptide reads, in one-letter code: MLKVGVVGCGAIASLITKALMSDRLNKAEVLAFYDGNLEKAEKLAMETGADFCRSLDELVSKDLDLIVECASVTAVEDTVIKSLNNGKDVIIMSVGAFADKDLFLKLYKLAEKLERKIYIPSGAVAGIDAVKSGSLGKISDVTLTTTKPVHGLKNALEEQGLNTDEIKEPKTVFEGTVFEAISKFPQNINVSVVLSLASRYPAKVKIIADPCAVVNRHEIFVKGSIGTIKTCVENNPCRDNPKTSALAAYSVIRLIKDLSEPIRIGT.

Alanine 124 and asparagine 190 together coordinate NAD(+). The active site involves histidine 218.

Belongs to the L-aspartate dehydrogenase family.

It catalyses the reaction L-aspartate + NADP(+) + H2O = oxaloacetate + NH4(+) + NADPH + H(+). The catalysed reaction is L-aspartate + NAD(+) + H2O = oxaloacetate + NH4(+) + NADH + H(+). It participates in cofactor biosynthesis; NAD(+) biosynthesis; iminoaspartate from L-aspartate (dehydrogenase route): step 1/1. Functionally, specifically catalyzes the NAD or NADP-dependent dehydrogenation of L-aspartate to iminoaspartate. The sequence is that of L-aspartate dehydrogenase from Methanococcus maripaludis (strain C5 / ATCC BAA-1333).